We begin with the raw amino-acid sequence, 367 residues long: Glutamate 5-kinase (367 aa).

Position 10 (Lys-10) interacts with ATP. The substrate site is built by Ser-50, Asp-137, and Asn-149. ATP is bound by residues 169–170 (TD) and 211–217 (TGGMSTK). One can recognise a PUA domain in the interval 275 to 353 (AGEITVDEGA…QQIDAILGYE (79 aa)).

Belongs to the glutamate 5-kinase family.

The protein localises to the cytoplasm. The enzyme catalyses L-glutamate + ATP = L-glutamyl 5-phosphate + ADP. Its pathway is amino-acid biosynthesis; L-proline biosynthesis; L-glutamate 5-semialdehyde from L-glutamate: step 1/2. Catalyzes the transfer of a phosphate group to glutamate to form L-glutamate 5-phosphate. The sequence is that of Glutamate 5-kinase from Salmonella paratyphi A (strain ATCC 9150 / SARB42).